Consider the following 152-residue polypeptide: Transcriptional repressor NrdR (152 aa).

The segment at 3-34 (CCYCGHGESKVLETRSAEEGRVIRRRRECMEC) is a zinc-finger region. Residues 49 to 139 (LIVRKKGGSL…VYRQFTDVGR (91 aa)) enclose the ATP-cone domain.

The protein belongs to the NrdR family. It depends on Zn(2+) as a cofactor.

In terms of biological role, negatively regulates transcription of bacterial ribonucleotide reductase nrd genes and operons by binding to NrdR-boxes. This Heliobacterium modesticaldum (strain ATCC 51547 / Ice1) protein is Transcriptional repressor NrdR.